The primary structure comprises 60 residues: uncharacterized protein (60 aa).

This is an uncharacterized protein from Methanocaldococcus jannaschii (strain ATCC 43067 / DSM 2661 / JAL-1 / JCM 10045 / NBRC 100440) (Methanococcus jannaschii).